The following is a 122-amino-acid chain: Basic phospholipase A2 (122 aa).

Intrachain disulfides connect C26-C115, C28-C44, C43-C95, C49-C122, C50-C88, C57-C81, and C75-C86. Residues Y27, G29, and G31 each contribute to the Ca(2+) site. H47 is an active-site residue. Residue D48 coordinates Ca(2+). D89 is a catalytic residue.

The protein belongs to the phospholipase A2 family. Group II subfamily. D49 sub-subfamily. In terms of assembly, homodimer. Requires Ca(2+) as cofactor. In terms of tissue distribution, expressed by the venom gland.

It is found in the secreted. It carries out the reaction a 1,2-diacyl-sn-glycero-3-phosphocholine + H2O = a 1-acyl-sn-glycero-3-phosphocholine + a fatty acid + H(+). Snake venom phospholipase A2 (PLA2) that inhibits neuromuscular transmission by blocking acetylcholine release from the nerve termini. PLA2 catalyzes the calcium-dependent hydrolysis of the 2-acyl groups in 3-sn-phosphoglycerides. The chain is Basic phospholipase A2 from Gloydius blomhoffii (Mamushi).